Reading from the N-terminus, the 63-residue chain is Large ribosomal subunit protein uL30 (63 aa).

The protein belongs to the universal ribosomal protein uL30 family. Part of the 50S ribosomal subunit.

The sequence is that of Large ribosomal subunit protein uL30 from Rickettsia prowazekii (strain Madrid E).